Reading from the N-terminus, the 366-residue chain is Ribosomal RNA large subunit methyltransferase M (366 aa).

S-adenosyl-L-methionine is bound by residues Ser-188, 221 to 224, Asp-240, Asp-260, and Asp-277; that span reads CPGG. The active-site Proton acceptor is the Lys-306.

Belongs to the class I-like SAM-binding methyltransferase superfamily. RNA methyltransferase RlmE family. RlmM subfamily. As to quaternary structure, monomer.

It is found in the cytoplasm. The catalysed reaction is cytidine(2498) in 23S rRNA + S-adenosyl-L-methionine = 2'-O-methylcytidine(2498) in 23S rRNA + S-adenosyl-L-homocysteine + H(+). In terms of biological role, catalyzes the 2'-O-methylation at nucleotide C2498 in 23S rRNA. In Photorhabdus laumondii subsp. laumondii (strain DSM 15139 / CIP 105565 / TT01) (Photorhabdus luminescens subsp. laumondii), this protein is Ribosomal RNA large subunit methyltransferase M.